The primary structure comprises 259 residues: Protein POLYCHOME (259 aa).

Residues 236 to 259 are disordered; that stretch reads KMKSTPSAKRAEREKRVRTLMSMR.

Interacts with APC/C activators such as APC5, FZR2, FZR3, CDC20.1 and CDC20.5. As to expression, expressed mainly in actively dividing cells (e.g. central cylinder of the root tip, young leaves and vascular tissues).

It localises to the nucleus. Negative regulator of the anaphase-promoting complex/cyclosome (APC/C) ubiquitin ligase required for proper mitotic progression and cell fate determination; inhibits premature cell differentiation. Prevents DNA endoreplication by promoting the maintenance of the mitotic state by preferentially inhibiting APC/C(FZR) and triggering cyclins accumulation (e.g. CYCB1-1, CYCB1-2 and CYCA2-3) in a temporal manner. Required for megagametophyte and endosperm development. Counteracts the activity of CCS52A1 thus inhibiting the turnover of CYCA2-3. Confers immunity to bacterial pathogens (e.g. Pseudomonas syringae pv. tomato DC3000), which is associated with increased expression of disease resistance (R) genes. The chain is Protein POLYCHOME (PYM) from Arabidopsis thaliana (Mouse-ear cress).